A 174-amino-acid chain; its full sequence is Beta-lactoglobulin (174 aa).

An N-terminal signal peptide occupies residues 1–18 (MKFLLLTVGLALIGAIQA). Intrachain disulfides connect cysteine 79/cysteine 172 and cysteine 122/cysteine 134.

This sequence belongs to the calycin superfamily. Lipocalin family. In terms of assembly, monomer.

It localises to the secreted. Functionally, lactoglobulin is the primary component of whey, it binds retinol and is probably involved in the transport of that molecule. This Notamacropus eugenii (Tammar wallaby) protein is Beta-lactoglobulin (LGB).